A 438-amino-acid polypeptide reads, in one-letter code: Forkhead box protein J1 (438 aa).

Residues Lys-123–Leu-217 constitute a DNA-binding region (fork-head).

The protein belongs to the FOXJ1 family.

It is found in the nucleus. Its function is as follows. Key transcription factor required for motile ciliogenesis. Activates genes essential for motile cilia formation and function. The sequence is that of Forkhead box protein J1 from Xenopus tropicalis (Western clawed frog).